The sequence spans 438 residues: 3-phosphoshikimate 1-carboxyvinyltransferase (438 aa).

Residues Lys-25, Ser-26, and Arg-30 each contribute to the 3-phosphoshikimate site. Lys-25 is a phosphoenolpyruvate binding site. Residues Gly-99 and Arg-128 each coordinate phosphoenolpyruvate. Ser-173, Gln-175, Asp-325, and Lys-352 together coordinate 3-phosphoshikimate. Gln-175 contributes to the phosphoenolpyruvate binding site. Asp-325 acts as the Proton acceptor in catalysis. Residues Arg-356 and Arg-398 each contribute to the phosphoenolpyruvate site.

The protein belongs to the EPSP synthase family. In terms of assembly, monomer.

It is found in the cytoplasm. The enzyme catalyses 3-phosphoshikimate + phosphoenolpyruvate = 5-O-(1-carboxyvinyl)-3-phosphoshikimate + phosphate. It functions in the pathway metabolic intermediate biosynthesis; chorismate biosynthesis; chorismate from D-erythrose 4-phosphate and phosphoenolpyruvate: step 6/7. Its function is as follows. Catalyzes the transfer of the enolpyruvyl moiety of phosphoenolpyruvate (PEP) to the 5-hydroxyl of shikimate-3-phosphate (S3P) to produce enolpyruvyl shikimate-3-phosphate and inorganic phosphate. This Prochlorococcus marinus (strain MIT 9515) protein is 3-phosphoshikimate 1-carboxyvinyltransferase.